The primary structure comprises 158 residues: Antitoxin PezA (158 aa).

The HTH cro/C1-type domain maps to 6 to 60 (IKSLRKTHDLTQLEFARIVGISRNSLSRYENGTSSVSTELIDIICQKFNVSYVDI). The segment at residues 17 to 36 (QLEFARIVGISRNSLSRYEN) is a DNA-binding region (H-T-H motif).

As to quaternary structure, probably a homodimer, forms a PezA(2)PezT(2) heterotetramer. The heterotetramer is much more stable than either of the proteins alone, and a specific mechanism may be necessary to liberate the toxin.

Functionally, antitoxin component of a type II toxin-antitoxin (TA) system. Upon expression in E.coli neutralizes the toxic effect of cognate toxin PezT. Represses transcription of its own operon, PezT acts as a corepressor, considerably increasing repression. This is Antitoxin PezA (pezA) from Streptococcus pneumoniae serotype 4 (strain ATCC BAA-334 / TIGR4).